A 375-amino-acid chain; its full sequence is Period circadian protein (375 aa).

Disordered stretches follow at residues 27–119 (VTAP…VPPV), 140–189 (KHRE…WEGE), and 219–255 (KCQA…QYTQ). Residues 69–91 (SGNFTTGSNLHMSSVTNTSNAGT) show a composition bias toward low complexity. Residues 92–113 (GTSGTGNSGGGGGGGGGAGPGN) show a composition bias toward gly residues. Over residues 145 to 156 (RGRSGEKNKKSA) the composition is skewed to basic and acidic residues. Residues 224 to 243 (GAGGGGSGSVGGTGNIGSGG) are compositionally biased toward gly residues. Over residues 245 to 255 (NAQPSTNQYTQ) the composition is skewed to polar residues.

Forms a heterodimer with timeless (TIM); the complex then translocates into the nucleus. Post-translationally, phosphorylated with a circadian rhythmicity, probably by the double-time protein (dbt). Phosphorylation could be implicated in the stability of per monomer and in the formation of heterodimer per-tim.

It is found in the nucleus. The protein localises to the cytoplasm. It localises to the perinuclear region. In terms of biological role, essential for biological clock functions. Determines the period length of circadian and ultradian rhythms; an increase in PER dosage leads to shortened circadian rhythms and a decrease leads to lengthened circadian rhythms. Essential for the circadian rhythmicity of locomotor activity, eclosion behavior, and for the rhythmic component of the male courtship song that originates in the thoracic nervous system. The biological cycle depends on the rhythmic formation and nuclear localization of the TIM-PER complex. Light induces the degradation of TIM, which promotes elimination of PER. Nuclear activity of the heterodimer coordinatively regulates PER and TIM transcription through a negative feedback loop. Behaves as a negative element in circadian transcriptional loop. Does not appear to bind DNA, suggesting indirect transcriptional inhibition. This chain is Period circadian protein (per), found in Drosophila sucinea (Fruit fly).